A 319-amino-acid polypeptide reads, in one-letter code: Acetyl-coenzyme A carboxylase carboxyl transferase subunit alpha (319 aa).

Positions 32–293 (NVDTEVRALE…KAVLLNELEA (262 aa)) constitute a CoA carboxyltransferase C-terminal domain.

Belongs to the AccA family. In terms of assembly, acetyl-CoA carboxylase is a heterohexamer composed of biotin carboxyl carrier protein (AccB), biotin carboxylase (AccC) and two subunits each of ACCase subunit alpha (AccA) and ACCase subunit beta (AccD).

The protein localises to the cytoplasm. The enzyme catalyses N(6)-carboxybiotinyl-L-lysyl-[protein] + acetyl-CoA = N(6)-biotinyl-L-lysyl-[protein] + malonyl-CoA. It participates in lipid metabolism; malonyl-CoA biosynthesis; malonyl-CoA from acetyl-CoA: step 1/1. Functionally, component of the acetyl coenzyme A carboxylase (ACC) complex. First, biotin carboxylase catalyzes the carboxylation of biotin on its carrier protein (BCCP) and then the CO(2) group is transferred by the carboxyltransferase to acetyl-CoA to form malonyl-CoA. This is Acetyl-coenzyme A carboxylase carboxyl transferase subunit alpha from Xylella fastidiosa (strain M12).